We begin with the raw amino-acid sequence, 252 residues long: Tabinhibitin 9 (252 aa).

A signal peptide spans 1–23 (MTSNLYYVLISPYSLAYMVQYRS). Positions 32–34 (RGD) match the Cell attachment site motif. The SCP domain occupies 63-207 (YIRSTMCEIM…KARAFFTCNF (145 aa)).

Belongs to the CRISP family. In terms of tissue distribution, expressed in salivary glands.

Its subcellular location is the secreted. Functionally, inhibits platelet aggregation induced by all agonists tested (ADP, arachidonic acid, the thromboxane A2 analog U46619, thrombin, and snake venom snaclecs (TMVA that activates platelet through GPIB, and stejnulxin that specifically acts through GPVI (GP6))). May act by competing with fibrinogen for binding to glycoprotein IIb/IIIa (ITGA2B/ITGB3). The protein is Tabinhibitin 9 of Tabanus yao (Horsefly).